Here is a 287-residue protein sequence, read N- to C-terminus: Bifunctional protein FolD (287 aa).

NADP(+) contacts are provided by residues 160–162 (GRS), S189, and I230.

The protein belongs to the tetrahydrofolate dehydrogenase/cyclohydrolase family. As to quaternary structure, homodimer.

The catalysed reaction is (6R)-5,10-methylene-5,6,7,8-tetrahydrofolate + NADP(+) = (6R)-5,10-methenyltetrahydrofolate + NADPH. It catalyses the reaction (6R)-5,10-methenyltetrahydrofolate + H2O = (6R)-10-formyltetrahydrofolate + H(+). It functions in the pathway one-carbon metabolism; tetrahydrofolate interconversion. Its function is as follows. Catalyzes the oxidation of 5,10-methylenetetrahydrofolate to 5,10-methenyltetrahydrofolate and then the hydrolysis of 5,10-methenyltetrahydrofolate to 10-formyltetrahydrofolate. This Chlamydia felis (strain Fe/C-56) (Chlamydophila felis) protein is Bifunctional protein FolD.